The sequence spans 147 residues: Mediator of RNA polymerase II transcription subunit 10 (147 aa).

The protein belongs to the Mediator complex subunit 10 family. In terms of assembly, component of the Mediator complex.

It is found in the nucleus. Its function is as follows. Component of the Mediator complex, a coactivator involved in the regulated transcription of nearly all RNA polymerase II-dependent genes. Mediator functions as a bridge to convey information from gene-specific regulatory proteins to the basal RNA polymerase II transcription machinery. Mediator is recruited to promoters by direct interactions with regulatory proteins and serves as a scaffold for the assembly of a functional preinitiation complex with RNA polymerase II and the general transcription factors. The chain is Mediator of RNA polymerase II transcription subunit 10 (NUT2) from Debaryomyces hansenii (strain ATCC 36239 / CBS 767 / BCRC 21394 / JCM 1990 / NBRC 0083 / IGC 2968) (Yeast).